We begin with the raw amino-acid sequence, 473 residues long: Sulfate adenylyltransferase subunit 1 (473 aa).

The tr-type G domain maps to 19–238 (KTLLKFLTCG…IKIKNSISSE (220 aa)). The segment at 28 to 35 (GSVDDGKS) is G1. 28 to 35 (GSVDDGKS) lines the GTP pocket. Positions 86–90 (GITID) are G2. The interval 107 to 110 (DTPG) is G3. Residues 107–111 (DTPGH) and 162–165 (NKMD) each bind GTP. Residues 162–165 (NKMD) form a G4 region. The segment at 200–202 (SAL) is G5.

It belongs to the TRAFAC class translation factor GTPase superfamily. Classic translation factor GTPase family. CysN/NodQ subfamily. Heterodimer composed of CysD, the smaller subunit, and CysN.

It catalyses the reaction sulfate + ATP + H(+) = adenosine 5'-phosphosulfate + diphosphate. It functions in the pathway sulfur metabolism; hydrogen sulfide biosynthesis; sulfite from sulfate: step 1/3. In terms of biological role, with CysD forms the ATP sulfurylase (ATPS) that catalyzes the adenylation of sulfate producing adenosine 5'-phosphosulfate (APS) and diphosphate, the first enzymatic step in sulfur assimilation pathway. APS synthesis involves the formation of a high-energy phosphoric-sulfuric acid anhydride bond driven by GTP hydrolysis by CysN coupled to ATP hydrolysis by CysD. This is Sulfate adenylyltransferase subunit 1 from Buchnera aphidicola subsp. Acyrthosiphon pisum (strain Tuc7).